Reading from the N-terminus, the 23-residue chain is Acetylcholine receptor subunit gamma (23 aa).

The protein belongs to the ligand-gated ion channel (TC 1.A.9) family. Acetylcholine receptor (TC 1.A.9.1) subfamily. Gamma/CHRNG sub-subfamily. As to quaternary structure, pentamer of two alpha chains, and one each of the beta, delta, and gamma chains.

The protein localises to the postsynaptic cell membrane. The protein resides in the cell membrane. The catalysed reaction is K(+)(in) = K(+)(out). The enzyme catalyses Na(+)(in) = Na(+)(out). After binding acetylcholine, the AChR responds by an extensive change in conformation that affects all subunits and leads to opening of an ion-conducting channel across the plasma membrane. The sequence is that of Acetylcholine receptor subunit gamma (chrng) from Electrophorus electricus (Electric eel).